The primary structure comprises 181 residues: UPF0397 protein SSU98_0390 (181 aa).

Helical transmembrane passes span 9–29 (VVAT…INIP), 46–66 (LLAV…GHTL), 70–90 (LTYG…LVVG), 108–128 (ILFF…VIAP), and 147–167 (LVAG…LLVV).

Belongs to the UPF0397 family.

It localises to the cell membrane. This chain is UPF0397 protein SSU98_0390, found in Streptococcus suis (strain 98HAH33).